Reading from the N-terminus, the 80-residue chain is Exodeoxyribonuclease 7 small subunit (80 aa).

Belongs to the XseB family. As to quaternary structure, heterooligomer composed of large and small subunits.

It localises to the cytoplasm. The enzyme catalyses Exonucleolytic cleavage in either 5'- to 3'- or 3'- to 5'-direction to yield nucleoside 5'-phosphates.. Functionally, bidirectionally degrades single-stranded DNA into large acid-insoluble oligonucleotides, which are then degraded further into small acid-soluble oligonucleotides. This Rickettsia canadensis (strain McKiel) protein is Exodeoxyribonuclease 7 small subunit.